Reading from the N-terminus, the 322-residue chain is Short chain dehydrogenase AOL_s00215g274 (322 aa).

Residues 47-48 (AV), 104-106 (IAV), 197-201 (YNVSK), and 230-232 (VAT) contribute to the NAD(+) site. Y197 acts as the Proton acceptor in catalysis.

It belongs to the short-chain dehydrogenases/reductases (SDR) family.

It participates in secondary metabolite biosynthesis; terpenoid biosynthesis. In terms of biological role, short chain dehydrogenase; part of the gene cluster that mediates the biosynthesis of sesquiterpenyl epoxy-cyclohexenoids (SECs) such as anthrobotrisins and arthrosporols, metabolites that possess a novel hybrid carbon skeleton consisting of a polyketide-derived epoxycyclohexenol combined with a terpenoid-derived monocyclic sesquiterpenol substructure (PKS-PTS hybrid). The SEC pathway plays an important role for fungal soil colonization via decreasing fungal nematode-capturing ability. Within the pathway, the cytochrome P450 monooxygenase AOL_s00215g274 is involved in specific regional ketone reductions at C-4 of farnesyl epoxy-quinone. The pathway begins with the biosynthesis of 6-methylsalicylic acid (6-MSA), the first precursor of the polyketide-derived epoxycyclohexenol in arthrosporols, by the polyketide synthase (PKS) AOL_s00215g283 via condensation of 1 acetate and 3 malonate units. The 6-methylsalicylic acid decarboxylase AOL_s00215g281 then catalyzes the decarboxylation of 6-methylsalicylic acid to yield m-cresol. The cytochrome P450 monooxygenase AOL_s00215g282 further oxidizes m-cresol to yield toluquinol. With the assistance of the oxidoreductase AOL_s00215g277, the polyprenyl transferase AOL_s00215g276 catalyzes the farnesylation of toluquinol to produce farnesyl hydroquinone, the hybrid precursor for biosynthesis of SECs. Farnesyl hydroquinone undergoes epoxidation and then subsequent dehydrogenation to form farnesyl epoxy-quinone, the first and simplest SEC. The cytochrome P450 monooxygenase AOL_s00215g278 and the FAD-dependent monooxygenase AOL_s00215g279 might be involved in the oxygenation of the phenol moiety, most likely in the epoxy formation. The cytochrome P450 monooxygenases AOL_s00215g274 and AOL_s00215g280 are involved in specific regional ketone reductions at respectively C-4 and C-1 of farnesyl epoxy-quinone PubMed:33823587. The chain is Short chain dehydrogenase AOL_s00215g274 from Arthrobotrys oligospora (strain ATCC 24927 / CBS 115.81 / DSM 1491) (Nematode-trapping fungus).